A 1402-amino-acid chain; its full sequence is Transcription elongation factor spt-6 (1402 aa).

A disordered region spans residues 1–199 (MSNSMRDLID…PKDRGLNIDT (199 aa)). Acidic residues-rich tracts occupy residues 10–28 (DGEAELDDEEDDESFDEEA), 40–52 (DSSEEEEDDEDEE), 62–75 (IVDEDEEDEAEDSD), and 90–102 (EEEEQLDEEDLDL). The span at 123 to 135 (HRDDHRPTERRGL) shows a compositional bias: basic and acidic residues. Residues 161–176 (DEFDDFIEDDYPEDDE) show a composition bias toward acidic residues. Basic and acidic residues predominate over residues 177-199 (ERRHREEDEEVARPKDRGLNIDT). The region spanning 1094–1161 (GMIVAANVRV…KEFVSKLSMR (68 aa)) is the S1 motif domain. In terms of domain architecture, SH2 spans 1209–1306 (PLFKPFNSTQ…KKVDELMQCD (98 aa)).

Belongs to the SPT6 family.

The protein localises to the nucleus. The protein resides in the chromosome. In terms of biological role, histone H3-H4 chaperone that plays a role in maintenance of chromatin structure during RNA polymerase II transcription elongation thereby repressing transcription initiation from cryptic promoters. Mediates the reassembly of nucleosomes onto the promoters of at least a selected set of genes during repression; the nucleosome reassembly is essential for transcriptional repression. Essential for viability. The sequence is that of Transcription elongation factor spt-6 (spt-6) from Neurospora crassa (strain ATCC 24698 / 74-OR23-1A / CBS 708.71 / DSM 1257 / FGSC 987).